A 130-amino-acid polypeptide reads, in one-letter code: Small ribosomal subunit protein uS9 (130 aa).

This sequence belongs to the universal ribosomal protein uS9 family.

The polypeptide is Small ribosomal subunit protein uS9 (Cupriavidus metallidurans (strain ATCC 43123 / DSM 2839 / NBRC 102507 / CH34) (Ralstonia metallidurans)).